The chain runs to 956 residues: Zinc protease PQQL-like (956 aa).

The residue at position 1 (M1) is an N-acetylmethionine. A Zn(2+)-binding site is contributed by H85. E88 serves as the catalytic Proton acceptor. Residue H89 participates in Zn(2+) binding. Residue E165 is part of the active site. A Zn(2+)-binding site is contributed by E172.

It belongs to the peptidase M16 family. The cofactor is Zn(2+).

This chain is Zinc protease PQQL-like, found in Arabidopsis thaliana (Mouse-ear cress).